A 407-amino-acid chain; its full sequence is Serine/threonine transporter SstT (407 aa).

Transmembrane regions (helical) follow at residues 10-30, 42-62, 81-101, 141-161, 179-199, 218-238, 245-267, 288-308, and 316-336; these read AKGN…LIGI, LGIL…FILI, IIIL…LANF, ALSS…GAAL, VLKI…GLVA, ILLV…IVFF, FPLI…SSAA, ISIP…IAIL, and VGIE…TFAA.

The protein belongs to the dicarboxylate/amino acid:cation symporter (DAACS) (TC 2.A.23) family.

It is found in the cell inner membrane. The enzyme catalyses L-serine(in) + Na(+)(in) = L-serine(out) + Na(+)(out). It carries out the reaction L-threonine(in) + Na(+)(in) = L-threonine(out) + Na(+)(out). In terms of biological role, involved in the import of serine and threonine into the cell, with the concomitant import of sodium (symport system). This Campylobacter jejuni subsp. doylei (strain ATCC BAA-1458 / RM4099 / 269.97) protein is Serine/threonine transporter SstT.